A 321-amino-acid chain; its full sequence is Probable pectate lyase A (321 aa).

A signal peptide spans 1 to 18; that stretch reads MKFVATLIACGLSGLALA. Asparagine 93 carries an N-linked (GlcNAc...) asparagine glycan. 3 residues coordinate Ca(2+): aspartate 134, aspartate 163, and aspartate 167. Residue arginine 220 is part of the active site. Asparagine 238 is a glycosylation site (N-linked (GlcNAc...) asparagine).

The protein belongs to the polysaccharide lyase 1 family. Ca(2+) serves as cofactor.

It localises to the secreted. It carries out the reaction Eliminative cleavage of (1-&gt;4)-alpha-D-galacturonan to give oligosaccharides with 4-deoxy-alpha-D-galact-4-enuronosyl groups at their non-reducing ends.. Pectinolytic enzyme consist of four classes of enzymes: pectin lyase, polygalacturonase, pectin methylesterase and rhamnogalacturonase. Among pectinolytic enzymes, pectin lyase is the most important in depolymerization of pectin, since it cleaves internal glycosidic bonds of highly methylated pectins. Favors pectate, the anion, over pectin, the methyl ester. This chain is Probable pectate lyase A (plyA), found in Aspergillus fumigatus (strain CBS 144.89 / FGSC A1163 / CEA10) (Neosartorya fumigata).